The following is a 218-amino-acid chain: Putative pre-16S rRNA nuclease (218 aa).

This sequence belongs to the YqgF nuclease family.

It localises to the cytoplasm. In terms of biological role, could be a nuclease involved in processing of the 5'-end of pre-16S rRNA. The chain is Putative pre-16S rRNA nuclease from Thermotoga maritima (strain ATCC 43589 / DSM 3109 / JCM 10099 / NBRC 100826 / MSB8).